A 318-amino-acid chain; its full sequence is L-malyl-CoA/beta-methylmalyl-CoA lyase (318 aa).

F19, R24, K30, and R76 together coordinate substrate. Residues E141 and D168 each coordinate Mg(2+). Substrate-binding positions include 167 to 168 (AD) and 251 to 252 (IH).

This sequence belongs to the HpcH/HpaI aldolase family. Homohexamer. Dimer of trimers. Mg(2+) serves as cofactor. The cofactor is Mn(2+).

The catalysed reaction is (S)-malyl-CoA = glyoxylate + acetyl-CoA. The enzyme catalyses (2R,3S)-beta-methylmalyl-CoA = propanoyl-CoA + glyoxylate. Involved in the ethylmalonyl-CoA pathway for acetate assimilation. Catalyzes the reversible condensation of glyoxylate and acetyl-CoA to L-malyl-CoA and the reversible condensation of glyoxylate and propionyl-CoA to yield beta-methylmalyl-CoA. The polypeptide is L-malyl-CoA/beta-methylmalyl-CoA lyase (Cereibacter sphaeroides (strain ATCC 17025 / ATH 2.4.3) (Rhodobacter sphaeroides)).